We begin with the raw amino-acid sequence, 335 residues long: Galactosylgalactosylxylosylprotein 3-beta-glucuronosyltransferase 3 (335 aa).

Over 1 to 7 (MKLKLKN) the chain is Cytoplasmic. A helical; Signal-anchor for type II membrane protein transmembrane segment spans residues 8–28 (VFLAYFLVSIAGLLYALVQLG). Residues 29-335 (QPCDCLPPLR…GQGSDPAIEV (307 aa)) lie on the Lumenal side of the membrane. Residues 82–84 (PTY), Asp-113, Arg-156, Arg-161, and 194–196 (DDD) each bind UDP-alpha-D-glucuronate. Asp-196 is a binding site for Mn(2+). An interaction with galactose moiety of substrate glycoprotein region spans residues 243-252 (WEPNRPFPLD). Glu-281 functions as the Proton donor/acceptor in the catalytic mechanism. The N-linked (GlcNAc...) asparagine glycan is linked to Asn-300. 308 to 310 (HTR) is a binding site for UDP-alpha-D-glucuronate. The segment covering 312-322 (EKPKMKQEEQL) has biased composition (basic and acidic residues). The segment at 312–335 (EKPKMKQEEQLQRQGQGSDPAIEV) is disordered.

It belongs to the glycosyltransferase 43 family. As to quaternary structure, homodimer; disulfide-linked. Interacts with PXYLP1; the interaction increases the 2-phosphoxylose phosphatase activity of PXYLP1 during completion of linkage region formation in a B3GAT3-mediated manner. The cofactor is Mn(2+). In terms of processing, N-glycosylated. In terms of tissue distribution, expressed in heart, aorta, bone, and also in osteoblasts.

The protein localises to the golgi apparatus membrane. It localises to the golgi apparatus. Its subcellular location is the cis-Golgi network. The catalysed reaction is 3-O-(beta-D-galactosyl-(1-&gt;3)-beta-D-galactosyl-(1-&gt;4)-beta-D-xylosyl)-L-seryl-[protein] + UDP-alpha-D-glucuronate = 3-O-(beta-D-GlcA-(1-&gt;3)-beta-D-Gal-(1-&gt;3)-beta-D-Gal-(1-&gt;4)-beta-D-Xyl)-L-seryl-[protein] + UDP + H(+). Its pathway is protein modification; protein glycosylation. Functionally, glycosaminoglycans biosynthesis. Involved in forming the linkage tetrasaccharide present in heparan sulfate and chondroitin sulfate. Transfers a glucuronic acid moiety from the uridine diphosphate-glucuronic acid (UDP-GlcUA) to the common linkage region trisaccharide Gal-beta-1,3-Gal-beta-1,4-Xyl covalently bound to a Ser residue at the glycosaminylglycan attachment site of proteoglycans. Can also play a role in the biosynthesis of l2/HNK-1 carbohydrate epitope on glycoproteins. Stimulates 2-phosphoxylose phosphatase activity of PXYLP1 in presence of uridine diphosphate-glucuronic acid (UDP-GlcUA) during completion of linkage region formation. In Mus musculus (Mouse), this protein is Galactosylgalactosylxylosylprotein 3-beta-glucuronosyltransferase 3 (B3gat3).